Here is a 505-residue protein sequence, read N- to C-terminus: ATP synthase subunit alpha (505 aa).

An ATP-binding site is contributed by 170–177; that stretch reads GDRQTGKT.

It belongs to the ATPase alpha/beta chains family. F-type ATPases have 2 components, CF(1) - the catalytic core - and CF(0) - the membrane proton channel. CF(1) has five subunits: alpha(3), beta(3), gamma(1), delta(1), epsilon(1). CF(0) has four main subunits: a(1), b(1), b'(1) and c(9-12).

The protein resides in the cellular thylakoid membrane. The enzyme catalyses ATP + H2O + 4 H(+)(in) = ADP + phosphate + 5 H(+)(out). Its function is as follows. Produces ATP from ADP in the presence of a proton gradient across the membrane. The alpha chain is a regulatory subunit. This Synechococcus sp. (strain RCC307) protein is ATP synthase subunit alpha.